Reading from the N-terminus, the 104-residue chain is Large ribosomal subunit protein bL21 (104 aa).

Belongs to the bacterial ribosomal protein bL21 family. As to quaternary structure, part of the 50S ribosomal subunit. Contacts protein L20.

Its function is as follows. This protein binds to 23S rRNA in the presence of protein L20. In Helicobacter pylori (strain P12), this protein is Large ribosomal subunit protein bL21.